Here is a 410-residue protein sequence, read N- to C-terminus: Sporulation killing factor maturation protein SkfB (410 aa).

Residues 103 to 314 (SYLPISCTLQ…LREARHKWGD (212 aa)) enclose the Radical SAM core domain. Residues Cys-117, Cys-121, Cys-124, Cys-380, Cys-385, and Cys-387 each contribute to the [4Fe-4S] cluster site.

Belongs to the radical SAM superfamily. It depends on [4Fe-4S] cluster as a cofactor.

Its subcellular location is the cytoplasm. In terms of biological role, catalyzes the formation of the thioether bond required for production of the sporulation killing factor (SKF) from SkfA. Forms the cysteine-methionine thioether bond found in SKF; the acceptor amino acid can be hydrophobic, aromatic or a small hydrophilic amino acid but not a larger hydrophilic amino acid, i.e. Met=Ala, Phe, Leu, Tyr&gt;Asn, Ser&gt;&gt;Gln, Glu, Lys. The relative position of Cys and Met in the substrate cannot be inverted, in vitro the thioether bond cannot be made in the absence of the SkfA propeptide, suggesting this is the first reaction in SKF maturation. In vitro, in the absence of a second substrate, cleaves S-adenosyl-L-methionine into Met and 5'-dA. This is Sporulation killing factor maturation protein SkfB from Bacillus subtilis (strain 168).